A 368-amino-acid polypeptide reads, in one-letter code: Putative phospho-2-dehydro-3-deoxyheptonate aldolase (368 aa).

Belongs to the class-I DAHP synthase family.

The enzyme catalyses D-erythrose 4-phosphate + phosphoenolpyruvate + H2O = 7-phospho-2-dehydro-3-deoxy-D-arabino-heptonate + phosphate. It participates in metabolic intermediate biosynthesis; chorismate biosynthesis; chorismate from D-erythrose 4-phosphate and phosphoenolpyruvate: step 1/7. In terms of biological role, stereospecific condensation of phosphoenolpyruvate (PEP) and D-erythrose-4-phosphate (E4P) giving rise to 3-deoxy-D-arabino-heptulosonate-7-phosphate (DAHP). In Schizosaccharomyces pombe (strain 972 / ATCC 24843) (Fission yeast), this protein is Putative phospho-2-dehydro-3-deoxyheptonate aldolase.